Reading from the N-terminus, the 371-residue chain is tRNA (guanine(26)-N(2))-dimethyltransferase (371 aa).

Positions 1–370 constitute a Trm1 methyltransferase domain; that stretch reads MDVSEGGVTV…GGLAEVEAAV (370 aa). S-adenosyl-L-methionine contacts are provided by arginine 36, arginine 66, aspartate 81, aspartate 107, and alanine 108. Zn(2+) is bound by residues cysteine 238, cysteine 241, cysteine 258, and cysteine 261.

The protein belongs to the class I-like SAM-binding methyltransferase superfamily. Trm1 family.

The catalysed reaction is guanosine(26) in tRNA + 2 S-adenosyl-L-methionine = N(2)-dimethylguanosine(26) in tRNA + 2 S-adenosyl-L-homocysteine + 2 H(+). Functionally, dimethylates a single guanine residue at position 26 of a number of tRNAs using S-adenosyl-L-methionine as donor of the methyl groups. This is tRNA (guanine(26)-N(2))-dimethyltransferase from Halobacterium salinarum (strain ATCC 700922 / JCM 11081 / NRC-1) (Halobacterium halobium).